Reading from the N-terminus, the 226-residue chain is Urease accessory protein UreF (226 aa).

Belongs to the UreF family. As to quaternary structure, ureD, UreF and UreG form a complex that acts as a GTP-hydrolysis-dependent molecular chaperone, activating the urease apoprotein by helping to assemble the nickel containing metallocenter of UreC. The UreE protein probably delivers the nickel.

The protein resides in the cytoplasm. Functionally, required for maturation of urease via the functional incorporation of the urease nickel metallocenter. This chain is Urease accessory protein UreF, found in Burkholderia cenocepacia (strain ATCC BAA-245 / DSM 16553 / LMG 16656 / NCTC 13227 / J2315 / CF5610) (Burkholderia cepacia (strain J2315)).